The chain runs to 253 residues: Triosephosphate isomerase (253 aa).

A substrate-binding site is contributed by 9–11 (NWK). Residue His-96 is the Electrophile of the active site. The Proton acceptor role is filled by Glu-168. Substrate contacts are provided by residues Gly-174, Ser-213, and 234–235 (GG).

The protein belongs to the triosephosphate isomerase family. Homodimer.

The protein localises to the cytoplasm. It catalyses the reaction D-glyceraldehyde 3-phosphate = dihydroxyacetone phosphate. It participates in carbohydrate biosynthesis; gluconeogenesis. It functions in the pathway carbohydrate degradation; glycolysis; D-glyceraldehyde 3-phosphate from glycerone phosphate: step 1/1. Involved in the gluconeogenesis. Catalyzes stereospecifically the conversion of dihydroxyacetone phosphate (DHAP) to D-glyceraldehyde-3-phosphate (G3P). This is Triosephosphate isomerase from Hydrogenovibrio crunogenus (strain DSM 25203 / XCL-2) (Thiomicrospira crunogena).